A 132-amino-acid chain; its full sequence is AP-2 complex subunit sigma (132 aa).

Belongs to the adaptor complexes small subunit family. In terms of assembly, adaptor protein complex 2 (AP-2) is a heterotetramer composed of two large adaptins (alpha-type and beta-type subunits), a medium adaptin (mu-type subunit AP50) and a small adaptin (sigma-type subunit AP17). In terms of tissue distribution, widely expressed in the embryo, endosperm, leaf and root.

The protein localises to the cell membrane. It is found in the membrane. The protein resides in the coated pit. Component of the adaptor complexes which link clathrin to receptors in coated vesicles. Clathrin-associated protein complexes are believed to interact with the cytoplasmic tails of membrane proteins, leading to their selection and concentration. AP2S1/AP17 is a subunit of the plasma membrane adaptor. The complex binds polyphosphoinositides. This chain is AP-2 complex subunit sigma (AP-17), found in Zea mays (Maize).